Here is a 152-residue protein sequence, read N- to C-terminus: Deoxyuridine 5'-triphosphate nucleotidohydrolase (152 aa).

Substrate-binding positions include 70–72, N83, 87–89, and K97; these read RSG and TID.

The protein belongs to the dUTPase family. The cofactor is Mg(2+).

It catalyses the reaction dUTP + H2O = dUMP + diphosphate + H(+). The protein operates within pyrimidine metabolism; dUMP biosynthesis; dUMP from dCTP (dUTP route): step 2/2. This enzyme is involved in nucleotide metabolism: it produces dUMP, the immediate precursor of thymidine nucleotides and it decreases the intracellular concentration of dUTP so that uracil cannot be incorporated into DNA. This Corynebacterium diphtheriae (strain ATCC 700971 / NCTC 13129 / Biotype gravis) protein is Deoxyuridine 5'-triphosphate nucleotidohydrolase.